The primary structure comprises 515 residues: Serine--tRNA ligase, cytoplasmic (515 aa).

Residues 9 to 61 (RTDKGGDPEIIRETQRKRFKDVSLVDKLVQADTEWRKCRFTADNLNKAKNLCS) form an interaction with tRNA region. Residues threonine 271 and arginine 302 each coordinate L-serine. ATP is bound by residues 302–304 (RQE) and 318–321 (VHQF). Glutamate 325 is an L-serine binding site. ATP is bound at residue 391–394 (ELVS). Asparagine 427 serves as a coordination point for L-serine. The disordered stretch occupies residues 475-515 (PIDQETTKKQKKQQEGGKKKKHQGGDADLENKVENMSVNDS). Basic and acidic residues predominate over residues 479–507 (ETTKKQKKQQEGGKKKKHQGGDADLENKV). The Nuclear localization signal motif lies at 482–494 (KKQKKQQEGGKKK).

It belongs to the class-II aminoacyl-tRNA synthetase family. Type-1 seryl-tRNA synthetase subfamily.

Its subcellular location is the cytoplasm. The protein localises to the nucleus. It carries out the reaction tRNA(Ser) + L-serine + ATP = L-seryl-tRNA(Ser) + AMP + diphosphate + H(+). The catalysed reaction is tRNA(Sec) + L-serine + ATP = L-seryl-tRNA(Sec) + AMP + diphosphate + H(+). Functionally, catalyzes the attachment of serine to tRNA(Ser) in a two-step reaction: serine is first activated by ATP to form Ser-AMP and then transferred to the acceptor end of tRNA(Ser). Is probably also able to aminoacylate tRNA(Sec) with serine, to form the misacylated tRNA L-seryl-tRNA(Sec), which will be further converted into selenocysteinyl-tRNA(Sec). In the nucleus, binds to the vegfa core promoter and prevents myc binding and transcriptional activation by myc. Thereby inhibits the production of vegfa and sprouting angiogenesis mediated by vegfa. In Danio rerio (Zebrafish), this protein is Serine--tRNA ligase, cytoplasmic (sars1).